The primary structure comprises 357 residues: Geranylgeranyl pyrophosphate synthase 11, chloroplastic (357 aa).

A chloroplast-targeting transit peptide spans 1–37 (MATTLSSSSLFIQFRGRRYNSLSSFNNLQKRTVLSLS). Isopentenyl diphosphate is bound by residues Lys103, Arg106, and His135. Mg(2+)-binding residues include Asp142 and Asp148. Residue Arg153 coordinates dimethylallyl diphosphate. Arg154 is a binding site for isopentenyl diphosphate. The dimethylallyl diphosphate site is built by Lys242, Thr243, Gln280, Lys297, and Lys307.

The protein belongs to the FPP/GGPP synthase family. As to quaternary structure, monomer. It depends on Mg(2+) as a cofactor.

It is found in the plastid. The protein resides in the chloroplast. The catalysed reaction is isopentenyl diphosphate + dimethylallyl diphosphate = (2E)-geranyl diphosphate + diphosphate. It catalyses the reaction isopentenyl diphosphate + (2E)-geranyl diphosphate = (2E,6E)-farnesyl diphosphate + diphosphate. The enzyme catalyses isopentenyl diphosphate + (2E,6E)-farnesyl diphosphate = (2E,6E,10E)-geranylgeranyl diphosphate + diphosphate. The protein operates within isoprenoid biosynthesis; farnesyl diphosphate biosynthesis; farnesyl diphosphate from geranyl diphosphate and isopentenyl diphosphate: step 1/1. Its pathway is isoprenoid biosynthesis; geranyl diphosphate biosynthesis; geranyl diphosphate from dimethylallyl diphosphate and isopentenyl diphosphate: step 1/1. It participates in isoprenoid biosynthesis; geranylgeranyl diphosphate biosynthesis; geranylgeranyl diphosphate from farnesyl diphosphate and isopentenyl diphosphate: step 1/1. Its function is as follows. Catalyzes the trans-addition of the three molecules of IPP onto DMAPP to form geranylgeranyl pyrophosphate. The sequence is that of Geranylgeranyl pyrophosphate synthase 11, chloroplastic from Arabidopsis thaliana (Mouse-ear cress).